Reading from the N-terminus, the 87-residue chain is Omega-lycotoxin-Am1c (87 aa).

Residues 1 to 17 (MKLSIFFVLFFIAIAYC) form the signal peptide. Residues 18 to 40 (QPEFLDDEEDEVEETLPVAEEGR) constitute a propeptide that is removed on maturation. 4 disulfides stabilise this stretch: Cys-44–Cys-59, Cys-51–Cys-64, Cys-58–Cys-84, and Cys-66–Cys-82.

The protein belongs to the neurotoxin omega-lctx family. Expressed by the venom gland.

It is found in the secreted. In terms of biological role, modulates Cav2.1/CACNA1A voltage-gated calcium channels (P/Q-type currents) in rat cerebellar Purkinje cells and hippocampal CA1-CA3 neurons. At saturating concentrations (&gt;10 nM) decelerates activation kinetics and slightly increases peak amplitude without affecting deactivation kinetics. In vivo, does not cause death when intravenously injected into mice. In rat models, through its activity on Cav2.1/CACNA1A, has an ameliorative effect on memory defects provoked by hyperstimulation of N-methyl-D-aspartate receptors (NMDARs) in the hippocampus. This Alopecosa marikovskyi (Wolf spider) protein is Omega-lycotoxin-Am1c.